The primary structure comprises 323 residues: Aquaporin-2 (323 aa).

3 helical membrane-spanning segments follow: residues 32 to 54 (FLAVFVLMVFTEGCSASAIFTHR), 74 to 96 (YVAGGVTGAFLNPAIAVAFSVLG), and 103 to 123 (CFCYMIAQYLGAFLASLAIYA). Residues 85-87 (NPA) carry the NPA 1 motif. Asn-143 is a glycosylation site (N-linked (GlcNAc...) asparagine). 2 helical membrane passes run 161 to 181 (GAFVDQVFGTALLIIVVLSMV) and 193 to 213 (FPIAIGLLIVVLDISLAYNAG). The NPA 2 motif lies at 217-219 (NPS). The helical transmembrane segment at 243–263 (YTWFFVPVVGSHAGAIVGAVI) threads the bilayer. An N-linked (GlcNAc...) asparagine glycan is attached at Asn-292.

Belongs to the MIP/aquaporin (TC 1.A.8) family.

It localises to the cell membrane. It carries out the reaction H2O(in) = H2O(out). It catalyses the reaction glycerol(in) = glycerol(out). Functionally, aquaglyceroporin that may modulate the water content and osmolytes during anhydrobiosis. The chain is Aquaporin-2 from Milnesium tardigradum (Water bear).